Reading from the N-terminus, the 244-residue chain is Methanethiol S-methyltransferase (244 aa).

Helical transmembrane passes span 7–27, 41–61, 90–110, 120–140, and 181–201; these read IIYG…AIGF, IAAP…VFAV, LLAS…PAVI, VALW…TFMI, and GFVV…LFAI.

The protein belongs to the nurim family.

It is found in the membrane. The enzyme catalyses methanethiol + S-adenosyl-L-methionine = dimethyl sulfide + S-adenosyl-L-homocysteine + H(+). Its function is as follows. Catalyzes the methylation of methanethiol (MeSH) to yield dimethylsulphide (DMS). This chain is Methanethiol S-methyltransferase, found in Mycobacterium tuberculosis (strain ATCC 25618 / H37Rv).